The sequence spans 494 residues: Transmembrane and coiled-coil domain-containing protein 6 (494 aa).

A coiled-coil region spans residues 15-39 (GVEELRRRRREREAALRKARREQQL). A run of 2 helical transmembrane segments spans residues 338-358 (LVAA…ALLP) and 386-406 (PLLQ…TVLC).

The protein resides in the membrane. The chain is Transmembrane and coiled-coil domain-containing protein 6 (Tmco6) from Mus musculus (Mouse).